Reading from the N-terminus, the 428-residue chain is Phosphomethylpyrimidine synthase (428 aa).

Substrate contacts are provided by residues N66, M95, Y124, H163, 185 to 187, 226 to 229, and E265; these read SRG and DGLR. Position 269 (H269) interacts with Zn(2+). Residue Y292 participates in substrate binding. H333 is a binding site for Zn(2+). [4Fe-4S] cluster is bound by residues C407, C410, and C414.

This sequence belongs to the ThiC family. The cofactor is [4Fe-4S] cluster.

It catalyses the reaction 5-amino-1-(5-phospho-beta-D-ribosyl)imidazole + S-adenosyl-L-methionine = 4-amino-2-methyl-5-(phosphooxymethyl)pyrimidine + CO + 5'-deoxyadenosine + formate + L-methionine + 3 H(+). It functions in the pathway cofactor biosynthesis; thiamine diphosphate biosynthesis. Its function is as follows. Catalyzes the synthesis of the hydroxymethylpyrimidine phosphate (HMP-P) moiety of thiamine from aminoimidazole ribotide (AIR) in a radical S-adenosyl-L-methionine (SAM)-dependent reaction. This is Phosphomethylpyrimidine synthase from Thermococcus kodakarensis (strain ATCC BAA-918 / JCM 12380 / KOD1) (Pyrococcus kodakaraensis (strain KOD1)).